The primary structure comprises 596 residues: Phosphoenolpyruvate carboxykinase [GTP] (596 aa).

Substrate is bound by residues Arg77 and 205–207 (YGG). Mn(2+)-binding residues include Lys214 and His234. Residue Ser256 participates in substrate binding. Position 257-262 (257-262 (ACGKTN)) interacts with GTP. Cys258 is a catalytic residue. Residue Asp283 coordinates Mn(2+). The segment at 362–388 (KKGSTEKAAHPNSRFTAPAKNNPAISP) is disordered. Substrate is bound at residue 373–375 (NSR). GTP-binding positions include Arg375, Arg406, and 499–502 (YGDN).

This sequence belongs to the phosphoenolpyruvate carboxykinase [GTP] family. Monomer. Mn(2+) serves as cofactor.

It localises to the cytoplasm. It catalyses the reaction oxaloacetate + GTP = phosphoenolpyruvate + GDP + CO2. The protein operates within carbohydrate biosynthesis; gluconeogenesis. In terms of biological role, catalyzes the conversion of oxaloacetate (OAA) to phosphoenolpyruvate (PEP), the rate-limiting step in the metabolic pathway that produces glucose from lactate and other precursors derived from the citric acid cycle. The sequence is that of Phosphoenolpyruvate carboxykinase [GTP] from Anaeromyxobacter dehalogenans (strain 2CP-C).